The chain runs to 190 residues: GTP cyclohydrolase 1 (190 aa).

Zn(2+) contacts are provided by C80, H83, and C151.

The protein belongs to the GTP cyclohydrolase I family. Toroid-shaped homodecamer, composed of two pentamers of five dimers.

The enzyme catalyses GTP + H2O = 7,8-dihydroneopterin 3'-triphosphate + formate + H(+). Its pathway is cofactor biosynthesis; 7,8-dihydroneopterin triphosphate biosynthesis; 7,8-dihydroneopterin triphosphate from GTP: step 1/1. The chain is GTP cyclohydrolase 1 from Rickettsia felis (strain ATCC VR-1525 / URRWXCal2) (Rickettsia azadi).